A 287-amino-acid polypeptide reads, in one-letter code: Glucose import system permease protein GlcU (287 aa).

7 consecutive transmembrane segments (helical) span residues 14 to 34 (HYLA…AMLI), 76 to 96 (IIVI…AYFF), 113 to 133 (VLFS…LLPL), 149 to 169 (IIFA…SMFI), 194 to 214 (IVFP…IIQA), 218 to 238 (FFIP…IAVL), and 250 to 270 (DTFA…VFLG). One can recognise an ABC transmembrane type-1 domain in the interval 71 to 269 (LINSLIIVIP…IIPLAIFVFL (199 aa)).

Belongs to the binding-protein-dependent transport system permease family. The complex is composed of two ATP-binding proteins (GlcV), two transmembrane proteins (GlcT and GlcU) and a solute-binding protein (GlcS).

The protein resides in the cell membrane. Its function is as follows. Part of the ABC transporter complex GlcSTUV involved in glucose uptake. Responsible for the translocation of the substrate across the membrane. In Saccharolobus solfataricus (strain ATCC 35092 / DSM 1617 / JCM 11322 / P2) (Sulfolobus solfataricus), this protein is Glucose import system permease protein GlcU.